We begin with the raw amino-acid sequence, 521 residues long: Probable protein phosphatase 2C 16 (521 aa).

Residues 21-327 (KYVVSSMQGW…ENTTVILVQF (307 aa)) enclose the PPM-type phosphatase domain. Residues Asp-57, Gly-58, Gln-276, and Glu-318 each coordinate Mn(2+). The segment at 354 to 431 (AAPAGASDTS…ADADDGAPKP (78 aa)) is disordered.

Belongs to the PP2C family. The cofactor is Mg(2+). Mn(2+) serves as cofactor.

It carries out the reaction O-phospho-L-seryl-[protein] + H2O = L-seryl-[protein] + phosphate. The enzyme catalyses O-phospho-L-threonyl-[protein] + H2O = L-threonyl-[protein] + phosphate. The polypeptide is Probable protein phosphatase 2C 16 (Oryza sativa subsp. japonica (Rice)).